Here is a 607-residue protein sequence, read N- to C-terminus: Rap1 GTPase-GDP dissociation stimulator 1-B (607 aa).

ARM repeat units follow at residues 79 to 118 (ELMRIPCVEADLIPPLVQLLHSKDQEVLLQTGRALGNICY), 170 to 211 (DSLQ…NLAE), 347 to 390 (DGNC…NLAI), 391 to 431 (PVVN…MLID), and 479 to 519 (SKDV…LIAA).

As to quaternary structure, interacts with ralB. Probably interacts with the post-translationally isoprenylated (geranyl-geranylation) forms of ral proteins. Interacts with both GDP-bound and GTP-bound forms of ralA, but interaction is much stronger with ralA-GDP.

It localises to the cytoplasm. It is found in the cytosol. The protein localises to the endoplasmic reticulum. The protein resides in the mitochondrion. Functionally, stimulates GDP/GTP exchange reaction of a group of small GTP-binding proteins (G proteins) including Rap1a/Rap1b, RhoA, RhoB and KRas, by stimulating the dissociation of GDP from and the subsequent binding of GTP to each small G protein. This is Rap1 GTPase-GDP dissociation stimulator 1-B (rap1gds1-b) from Xenopus laevis (African clawed frog).